A 274-amino-acid chain; its full sequence is Sulfur carrier protein FdhD (274 aa).

The active-site Cysteine persulfide intermediate is the Cys-121. Phe-258–Arg-263 serves as a coordination point for Mo-bis(molybdopterin guanine dinucleotide).

Belongs to the FdhD family.

The protein resides in the cytoplasm. Functionally, required for formate dehydrogenase (FDH) activity. Acts as a sulfur carrier protein that transfers sulfur from IscS to the molybdenum cofactor prior to its insertion into FDH. This is Sulfur carrier protein FdhD from Yersinia pestis bv. Antiqua (strain Antiqua).